Here is a 134-residue protein sequence, read N- to C-terminus: ATP synthase epsilon chain (134 aa).

It belongs to the ATPase epsilon chain family. In terms of assembly, F-type ATPases have 2 components, CF(1) - the catalytic core - and CF(0) - the membrane proton channel. CF(1) has five subunits: alpha(3), beta(3), gamma(1), delta(1), epsilon(1). CF(0) has three main subunits: a, b and c.

It is found in the cellular thylakoid membrane. Functionally, produces ATP from ADP in the presence of a proton gradient across the membrane. The sequence is that of ATP synthase epsilon chain from Prochlorococcus marinus (strain AS9601).